We begin with the raw amino-acid sequence, 513 residues long: Putative ribose/galactose/methyl galactoside import ATP-binding protein 2 (513 aa).

2 ABC transporter domains span residues Leu24–Glu260 and Val270–Leu510. Gly56–Ser63 provides a ligand contact to ATP.

The protein belongs to the ABC transporter superfamily. Carbohydrate importer 2 (CUT2) (TC 3.A.1.2) family.

It localises to the cell inner membrane. The enzyme catalyses D-ribose(out) + ATP + H2O = D-ribose(in) + ADP + phosphate + H(+). It catalyses the reaction D-galactose(out) + ATP + H2O = D-galactose(in) + ADP + phosphate + H(+). Functionally, part of an ABC transporter complex involved in carbohydrate import. Could be involved in ribose, galactose and/or methyl galactoside import. Responsible for energy coupling to the transport system. The sequence is that of Putative ribose/galactose/methyl galactoside import ATP-binding protein 2 from Rhizobium etli (strain ATCC 51251 / DSM 11541 / JCM 21823 / NBRC 15573 / CFN 42).